Reading from the N-terminus, the 239-residue chain is ATP-dependent dethiobiotin synthetase BioD (239 aa).

Position 15–20 (15–20) interacts with ATP; it reads EIGKTF. A Mg(2+)-binding site is contributed by Thr-19. Residue Lys-40 is part of the active site. Residues Asp-57, 118–121, 178–179, and 211–213 contribute to the ATP site; these read EGVG, NH, and AHL. Asp-57 and Glu-118 together coordinate Mg(2+).

This sequence belongs to the dethiobiotin synthetase family. As to quaternary structure, homodimer. Mg(2+) serves as cofactor.

It localises to the cytoplasm. The catalysed reaction is (7R,8S)-7,8-diammoniononanoate + CO2 + ATP = (4R,5S)-dethiobiotin + ADP + phosphate + 3 H(+). It participates in cofactor biosynthesis; biotin biosynthesis; biotin from 7,8-diaminononanoate: step 1/2. In terms of biological role, catalyzes a mechanistically unusual reaction, the ATP-dependent insertion of CO2 between the N7 and N8 nitrogen atoms of 7,8-diaminopelargonic acid (DAPA, also called 7,8-diammoniononanoate) to form a ureido ring. The polypeptide is ATP-dependent dethiobiotin synthetase BioD (Burkholderia ambifaria (strain MC40-6)).